A 582-amino-acid polypeptide reads, in one-letter code: MVSFLSSSVSRLPLRIAGRRIPGRFAVPQVRTYAKDLKFGVDARASLLTGVDTLARAVSVTLGPKGRNVLIDQPFGSPKITKDGVTVARSVSLKDKFENLGARLVQDVASKTNEVAGDGTTTATVLTRAIFSETVRNVAAGCNPMDLRRGIQLAVDNVVEFLQANKRDITTSEEISQVATISANGDTHIGELLAKAMERVGKEGVITVKEGRTISDELEVTEGMKFDRGYISPYFITDVKSQKVEFENPLILLSEKKVSAVQDILPSLELAAQQRRPLVIIAEDVDGEALAACILNKLRGQLQVVAIKAPGFGDNRRNMLGDLAVLTDSAVFNDEIDVSIEKAQPHHLGSCGSVTVTKEDTIIMKGAGDHVKVNDRCEQIRGVMADPNLTEYEKEKLQERLAKLSGGIAVIKVGGSSEVEVNEKKDRIVDALNAVKAAVSEGVLPGAGTSFVKASLRLGDIPTNNFDQKLGVEIVRKAITRPAQTILENAGLEGNLIVGKLKELYGKEFNIGYDIAKDRFVDLNEIGVLDPLKVVRTGLVDASGVASLMGTTECAIVDAPEESKAPAGPPGMGGMGGMPGMM.

The transit peptide at 1-35 (MVSFLSSSVSRLPLRIAGRRIPGRFAVPQVRTYAK) directs the protein to the mitochondrion. A phosphoserine mark is found at Ser77 and Ser92. The segment at 561–582 (EESKAPAGPPGMGGMGGMPGMM) is disordered. Positions 570–582 (PGMGGMGGMPGMM) are enriched in gly residues.

It belongs to the chaperonin (HSP60) family.

The protein resides in the mitochondrion. May participate in assembly and/or disassembly of proteins imported into the mitochondrion. HSP60 are ATPases and have affinity for unfolded proteins. This is Heat shock protein 60, mitochondrial (hsp60) from Schizosaccharomyces pombe (strain 972 / ATCC 24843) (Fission yeast).